A 305-amino-acid polypeptide reads, in one-letter code: Ribosomal RNA large subunit methyltransferase F (305 aa).

It belongs to the methyltransferase superfamily. METTL16/RlmF family.

The protein resides in the cytoplasm. The enzyme catalyses adenosine(1618) in 23S rRNA + S-adenosyl-L-methionine = N(6)-methyladenosine(1618) in 23S rRNA + S-adenosyl-L-homocysteine + H(+). Functionally, specifically methylates the adenine in position 1618 of 23S rRNA. This Enterobacter sp. (strain 638) protein is Ribosomal RNA large subunit methyltransferase F.